The chain runs to 526 residues: MTQQAANALPPVARTYQVRTYGCQMNVHDSERLAGLLEDAGYRRAADGADADVVVFNTCAVRENADNKLYGNLSHLAPRKRSEPQMQIAVGGCLAQKDRDAVLRRAPWVDVVFGTHNIGSLPTLLERARHNRAAQVEIAEALQEFPSTLPAARESAYAGWVSISVGCNNTCTFCIVPSLRGKEVDRRPGDVLAEIQTLVDQGVLEVTLLGQNVNAYGVSFAADERLREDPRMWQSAPHRNRGAFAELLRACGRIDGLERVRFTSPHPAEFTDDVIEAMAETPNVCPALHMPLQSGSDRILRAMRRSYRAEKYLGIIDRVRAAIPDAAITTDLIVGFPGETEEDFQATLDVVAASRFSSAFTFQYSKRPGTPAADMPGQLPKAVVSERYQRLIELQERISLEENQAQVGRTLELLVATGEGRKDAATARLSGRARDGRLVHFAPGAAADEPLARRAFDQVRPGDVVTTTVTGAAPHHLIADGALLTHRRTRAGDAHAAGLRPRTGVGLGIPGVGAPAPAPVTTGCAL.

Residues 14 to 130 form the MTTase N-terminal domain; that stretch reads RTYQVRTYGC…LPTLLERARH (117 aa). Residues Cys23, Cys59, Cys93, Cys167, Cys171, and Cys174 each contribute to the [4Fe-4S] cluster site. A Radical SAM core domain is found at 153–401; it reads RESAYAGWVS…IELQERISLE (249 aa). One can recognise a TRAM domain in the interval 404 to 483; the sequence is QAQVGRTLEL…PHHLIADGAL (80 aa).

This sequence belongs to the methylthiotransferase family. MiaB subfamily. As to quaternary structure, monomer. It depends on [4Fe-4S] cluster as a cofactor.

Its subcellular location is the cytoplasm. It catalyses the reaction N(6)-dimethylallyladenosine(37) in tRNA + (sulfur carrier)-SH + AH2 + 2 S-adenosyl-L-methionine = 2-methylsulfanyl-N(6)-dimethylallyladenosine(37) in tRNA + (sulfur carrier)-H + 5'-deoxyadenosine + L-methionine + A + S-adenosyl-L-homocysteine + 2 H(+). In terms of biological role, catalyzes the methylthiolation of N6-(dimethylallyl)adenosine (i(6)A), leading to the formation of 2-methylthio-N6-(dimethylallyl)adenosine (ms(2)i(6)A) at position 37 in tRNAs that read codons beginning with uridine. This Mycobacterium sp. (strain JLS) protein is tRNA-2-methylthio-N(6)-dimethylallyladenosine synthase.